Reading from the N-terminus, the 80-residue chain is Large ribosomal subunit protein bL31B (80 aa).

This sequence belongs to the bacterial ribosomal protein bL31 family. Type B subfamily. Part of the 50S ribosomal subunit.

In Streptococcus mutans serotype c (strain ATCC 700610 / UA159), this protein is Large ribosomal subunit protein bL31B.